The chain runs to 85 residues: UPF0386 protein Plav_1374 (85 aa).

This sequence belongs to the UPF0386 family.

The sequence is that of UPF0386 protein Plav_1374 from Parvibaculum lavamentivorans (strain DS-1 / DSM 13023 / NCIMB 13966).